Here is a 957-residue protein sequence, read N- to C-terminus: Translation initiation factor IF-2 (957 aa).

2 disordered regions span residues 34–282 (KSHS…RVVK) and 311–367 (SQSL…TIAG). The span at 107 to 161 (PARPQPPQAPTRPTPPAPVAPKPVEPVAAKPPAPPAKPEPTPPRPVPTLVPPPTR) shows a compositional bias: pro residues. Residues 163 to 188 (TKKEEKVAATPPPRKELKEPPKKEKG) show a composition bias toward basic and acidic residues. Residues 209–242 (PPAPAKPPEMAPKPALPELQPPPKPVRAPNPPKP) show a composition bias toward pro residues. Basic and acidic residues-rich tracts occupy residues 250–259 (LDDKSVSKVI) and 266–275 (KDFDEEESKR). In terms of domain architecture, tr-type G spans 444 to 617 (RRPPVVTIMG…LLVAEVEDLY (174 aa)). The tract at residues 453-460 (GHVDHGKT) is G1. 453–460 (GHVDHGKT) contributes to the GTP binding site. The tract at residues 478 to 482 (GITQH) is G2. Residues 503–506 (DTPG) form a G3 region. GTP is bound by residues 503 to 507 (DTPGH) and 557 to 560 (NKID). The segment at 557–560 (NKID) is G4. The interval 593–595 (SAL) is G5.

It belongs to the TRAFAC class translation factor GTPase superfamily. Classic translation factor GTPase family. IF-2 subfamily.

Its subcellular location is the cytoplasm. Functionally, one of the essential components for the initiation of protein synthesis. Protects formylmethionyl-tRNA from spontaneous hydrolysis and promotes its binding to the 30S ribosomal subunits. Also involved in the hydrolysis of GTP during the formation of the 70S ribosomal complex. This Thermosynechococcus vestitus (strain NIES-2133 / IAM M-273 / BP-1) protein is Translation initiation factor IF-2.